The chain runs to 319 residues: uncharacterized protein (319 aa).

This is an uncharacterized protein from Ictalurid herpesvirus 1 (strain Auburn) (IcHV-1).